We begin with the raw amino-acid sequence, 442 residues long: Ribosomal protein uS12 methylthiotransferase RimO (442 aa).

The region spanning 5-117 (PSIGVVSLGC…VLDAIHAALP (113 aa)) is the MTTase N-terminal domain. Positions 14, 50, 79, 148, 152, and 155 each coordinate [4Fe-4S] cluster. Residues 134-371 (LTPPHYAYLK…MAVQEAISRQ (238 aa)) form the Radical SAM core domain. The TRAM domain occupies 374–441 (QRRVGQRQRV…AHDLYGMVVS (68 aa)).

The protein belongs to the methylthiotransferase family. RimO subfamily. The cofactor is [4Fe-4S] cluster.

The protein localises to the cytoplasm. The catalysed reaction is L-aspartate(89)-[ribosomal protein uS12]-hydrogen + (sulfur carrier)-SH + AH2 + 2 S-adenosyl-L-methionine = 3-methylsulfanyl-L-aspartate(89)-[ribosomal protein uS12]-hydrogen + (sulfur carrier)-H + 5'-deoxyadenosine + L-methionine + A + S-adenosyl-L-homocysteine + 2 H(+). Functionally, catalyzes the methylthiolation of an aspartic acid residue of ribosomal protein uS12. The protein is Ribosomal protein uS12 methylthiotransferase RimO of Acidithiobacillus ferrooxidans (strain ATCC 53993 / BNL-5-31) (Leptospirillum ferrooxidans (ATCC 53993)).